We begin with the raw amino-acid sequence, 140 residues long: Large ribosomal subunit protein uL16 (140 aa).

The protein belongs to the universal ribosomal protein uL16 family. Part of the 50S ribosomal subunit.

Binds 23S rRNA and is also seen to make contacts with the A and possibly P site tRNAs. This chain is Large ribosomal subunit protein uL16, found in Syntrophus aciditrophicus (strain SB).